A 953-amino-acid chain; its full sequence is Translation initiation factor IF-2 (953 aa).

Disordered regions lie at residues S51–K242 and T279–K363. 2 stretches are compositionally biased toward basic and acidic residues: residues T80–Q89 and F98–A111. Residues Q131 to Q140 show a composition bias toward polar residues. Residues S149–K188 are compositionally biased toward basic and acidic residues. Residues R191–S207 are compositionally biased toward polar residues. The span at R229–K242 shows a compositional bias: basic and acidic residues. The segment covering K282 to T291 has biased composition (polar residues). The segment covering A300–K317 has biased composition (basic and acidic residues). The span at S322–N338 shows a compositional bias: low complexity. Residues K339 to N348 are compositionally biased toward basic residues. Positions E454–K623 constitute a tr-type G domain. Positions G463–T470 are G1. G463 to T470 is a binding site for GTP. The G2 stretch occupies residues G488–H492. Positions D509–G512 are G3. GTP contacts are provided by residues D509–H513 and N563–D566. The tract at residues N563–D566 is G4. The tract at residues S599–K601 is G5.

This sequence belongs to the TRAFAC class translation factor GTPase superfamily. Classic translation factor GTPase family. IF-2 subfamily.

Its subcellular location is the cytoplasm. One of the essential components for the initiation of protein synthesis. Protects formylmethionyl-tRNA from spontaneous hydrolysis and promotes its binding to the 30S ribosomal subunits. Also involved in the hydrolysis of GTP during the formation of the 70S ribosomal complex. The chain is Translation initiation factor IF-2 from Streptococcus pyogenes serotype M49 (strain NZ131).